Reading from the N-terminus, the 80-residue chain is Defensin-like protein 13 (80 aa).

Positions methionine 1–alanine 29 are cleaved as a signal peptide. Glutamine 30 bears the Pyrrolidone carboxylic acid mark. Cystine bridges form between cysteine 33/cysteine 80, cysteine 44/cysteine 65, cysteine 50/cysteine 74, and cysteine 54/cysteine 76.

This sequence belongs to the DEFL family. Forms oligomers in its native state. As to expression, expressed predominantly in siliques and dry seeds.

It localises to the secreted. Confers broad-spectrum resistance to pathogens. Possesses antifungal activity sensitive to inorganic cations in vitro. The protein is Defensin-like protein 13 (PDF1.1) of Arabidopsis thaliana (Mouse-ear cress).